The sequence spans 197 residues: Large ribosomal subunit protein bL9c (197 aa).

The N-terminal 42 residues, 1-42 (MASSTALSLSWSSSPCWSHSFNGGANETLKVSERRFNFEVVS), are a transit peptide targeting the chloroplast.

The protein belongs to the bacterial ribosomal protein bL9 family. In terms of assembly, part of the 50S ribosomal subunit.

Its subcellular location is the plastid. It is found in the chloroplast. Functionally, binds to the 23S rRNA. This chain is Large ribosomal subunit protein bL9c (RPL9), found in Arabidopsis thaliana (Mouse-ear cress).